A 333-amino-acid polypeptide reads, in one-letter code: Tetraacyldisaccharide 4'-kinase (333 aa).

Serine 55–threonine 62 lines the ATP pocket.

It belongs to the LpxK family.

It catalyses the reaction a lipid A disaccharide + ATP = a lipid IVA + ADP + H(+). It participates in glycolipid biosynthesis; lipid IV(A) biosynthesis; lipid IV(A) from (3R)-3-hydroxytetradecanoyl-[acyl-carrier-protein] and UDP-N-acetyl-alpha-D-glucosamine: step 6/6. Its function is as follows. Transfers the gamma-phosphate of ATP to the 4'-position of a tetraacyldisaccharide 1-phosphate intermediate (termed DS-1-P) to form tetraacyldisaccharide 1,4'-bis-phosphate (lipid IVA). This chain is Tetraacyldisaccharide 4'-kinase, found in Aeromonas hydrophila subsp. hydrophila (strain ATCC 7966 / DSM 30187 / BCRC 13018 / CCUG 14551 / JCM 1027 / KCTC 2358 / NCIMB 9240 / NCTC 8049).